A 464-amino-acid chain; its full sequence is ATP synthase subunit beta (464 aa).

153 to 160 (GGAGVGKT) is a binding site for ATP.

It belongs to the ATPase alpha/beta chains family. As to quaternary structure, F-type ATPases have 2 components, CF(1) - the catalytic core - and CF(0) - the membrane proton channel. CF(1) has five subunits: alpha(3), beta(3), gamma(1), delta(1), epsilon(1). CF(0) has three main subunits: a(1), b(2) and c(9-12). The alpha and beta chains form an alternating ring which encloses part of the gamma chain. CF(1) is attached to CF(0) by a central stalk formed by the gamma and epsilon chains, while a peripheral stalk is formed by the delta and b chains.

Its subcellular location is the cell inner membrane. It carries out the reaction ATP + H2O + 4 H(+)(in) = ADP + phosphate + 5 H(+)(out). Produces ATP from ADP in the presence of a proton gradient across the membrane. The catalytic sites are hosted primarily by the beta subunits. The sequence is that of ATP synthase subunit beta from Burkholderia vietnamiensis (strain G4 / LMG 22486) (Burkholderia cepacia (strain R1808)).